We begin with the raw amino-acid sequence, 947 residues long: MSVLSKLMRAGEGKILRKLHRIADQVNSIEEDFADLSDAELRALTDEYKQRYADGESLDDLLPEAFATVREAAKRVLGQRHYDVQIMGGAALHMGYVAEMKTGEGKTLVGTLPAYLNALSGEGVHIVTVNDYLAERDSELMGRVHKFLGLNVGCILANQTPAQRREMYACDITYGTNNEFGFDYLRDNMAWSKDELVQRGHNFAIVDEVDSILVDEARTPLIISGPADQATKWYGDFAKLVTRLKKGEAGNTLKGIEETGDYEVDEKKRTVAIHESGVAKVEDWLGIDNLYESVNTPLVGYLNNAIKAKELFKKDKDYVVLDGEVMIVDEHTGRILAGRRYNEGMHQAIEAKEGVDIKDENQTLATITLQNFFRLYKRHDHDGKEQPGLSGMTGTAMTEAAEFHQIYKLGVVPIPTNRPMVRKDQSDLIYRTEVAKFEAVVDDIEEKHRKGQPILVGTTSVEKSEYLSQQLSKRGVQHEVLNAKQHDREATIVAQAGRKGSVTVATNMAGRGTDIKLGGNPEDLAEAELRQRGLDPEEHIEEWAAALPAALERAEQAVKAEFEEVKELGGLYVLGTERHESRRIDNQLRGRSGRQGDPGESRFYLSLGDDLMRLFKAQMVERVMSMANVPDDVPIENKMVTRAIASAQSQVETQNFETRKNVLKYDEVLNRQREVIYGERRRVLEGEDLQEQIQHFTNDTIDAYVQAETAEGFPEDWDLDRLWGAFKQLYPVKVTVEELEEAAGDRAGLTADYIAESIKDDVREQYEAREKQLGSEIMRELERRVVLSVLDRKWREHLYEMDYLQEGIGLRAMAQKDPLVEYQREGFDMFQAMMDGIKEESVGYLFNLEVQVEQQVEEVPVEDAAPSLDKGAQDAVPAQAGARPEIRAKGLDAPQRRDLHFSAPTVDGEGGVVEGEFTDGEPAQAQSDGLTRAERRKQAKGGRRRKK.

ATP is bound by residues Gln-85, 103 to 107 (GEGKT), and Asp-514. Positions 864–947 (AAPSLDKGAQ…QAKGGRRRKK (84 aa)) are disordered. Over residues 884 to 900 (PEIRAKGLDAPQRRDLH) the composition is skewed to basic and acidic residues. The segment covering 934 to 947 (ERRKQAKGGRRRKK) has biased composition (basic residues).

It belongs to the SecA family. Monomer and homodimer. Part of the essential Sec protein translocation apparatus which comprises SecA, SecYEG and auxiliary proteins SecDF. Other proteins may also be involved.

It is found in the cell membrane. The protein resides in the cytoplasm. It carries out the reaction ATP + H2O + cellular proteinSide 1 = ADP + phosphate + cellular proteinSide 2.. Its function is as follows. Part of the Sec protein translocase complex. Interacts with the SecYEG preprotein conducting channel. Has a central role in coupling the hydrolysis of ATP to the transfer of proteins into and across the cell membrane, serving as an ATP-driven molecular motor driving the stepwise translocation of polypeptide chains across the membrane. The polypeptide is Protein translocase subunit SecA (Streptomyces lividans).